A 412-amino-acid chain; its full sequence is [Pyruvate dehydrogenase (acetyl-transferring)] kinase isozyme 4, mitochondrial (412 aa).

The Histidine kinase domain maps to I138–S368. Residues E254–R261, D293, S312–T313, and G329–L334 contribute to the ATP site.

It belongs to the PDK/BCKDK protein kinase family. Homodimer. Interacts with the pyruvate dehydrogenase complex subunit DLAT, and is part of the multimeric pyruvate dehydrogenase complex that contains multiple copies of pyruvate dehydrogenase (E1), dihydrolipoamide acetyltransferase (DLAT, E2) and lipoamide dehydrogenase (DLD, E3). In terms of tissue distribution, detected in skeletal muscle and heart.

It localises to the mitochondrion matrix. The enzyme catalyses L-seryl-[pyruvate dehydrogenase E1 alpha subunit] + ATP = O-phospho-L-seryl-[pyruvate dehydrogenase E1 alpha subunit] + ADP + H(+). In terms of biological role, kinase that plays a key role in regulation of glucose and fatty acid metabolism and homeostasis via phosphorylation of the pyruvate dehydrogenase subunits PDHA1 and PDHA2. This inhibits pyruvate dehydrogenase activity, and thereby regulates metabolite flux through the tricarboxylic acid cycle, down-regulates aerobic respiration and inhibits the formation of acetyl-coenzyme A from pyruvate. Inhibition of pyruvate dehydrogenase decreases glucose utilization and increases fat metabolism in response to prolonged fasting and starvation. Plays an important role in maintaining normal blood glucose levels under starvation, and is involved in the insulin signaling cascade. Via its regulation of pyruvate dehydrogenase activity, plays an important role in maintaining normal blood pH and in preventing the accumulation of ketone bodies under starvation. In the fed state, mediates cellular responses to glucose levels and to a high-fat diet. Regulates both fatty acid oxidation and de novo fatty acid biosynthesis. Plays a role in the generation of reactive oxygen species. Protects detached epithelial cells against anoikis. Plays a role in cell proliferation via its role in regulating carbohydrate and fatty acid metabolism. This chain is [Pyruvate dehydrogenase (acetyl-transferring)] kinase isozyme 4, mitochondrial (PDK4), found in Ictidomys tridecemlineatus (Thirteen-lined ground squirrel).